Here is a 111-residue protein sequence, read N- to C-terminus: MKIWKNILNIILALAVPIGLLFISMMIGEGVLDLFLDILNINYDDLSYLEEKAFAMFIPLLIIALTLLVTFLHHRSLRPLRLSTGFLSKETYKNYGIGIGIVFIFLSLIQS.

The next 2 helical transmembrane spans lie at 7–27 (ILNI…SMMI) and 53–73 (AFAM…TFLH).

Its subcellular location is the cell membrane. This is an uncharacterized protein from Bacillus anthracis.